Here is a 181-residue protein sequence, read N- to C-terminus: Oligoribonuclease (181 aa).

An Exonuclease domain is found at Leu-8 to Leu-171. Residue Tyr-129 is part of the active site.

This sequence belongs to the oligoribonuclease family.

It is found in the cytoplasm. 3'-to-5' exoribonuclease specific for small oligoribonucleotides. In Colwellia psychrerythraea (strain 34H / ATCC BAA-681) (Vibrio psychroerythus), this protein is Oligoribonuclease.